The chain runs to 231 residues: Large ribosomal subunit protein uL1 (231 aa).

The protein belongs to the universal ribosomal protein uL1 family. In terms of assembly, part of the 50S ribosomal subunit.

Its function is as follows. Binds directly to 23S rRNA. The L1 stalk is quite mobile in the ribosome, and is involved in E site tRNA release. Protein L1 is also a translational repressor protein, it controls the translation of the L11 operon by binding to its mRNA. This chain is Large ribosomal subunit protein uL1, found in Stutzerimonas stutzeri (strain A1501) (Pseudomonas stutzeri).